The chain runs to 255 residues: Proliferating cell nuclear antigen 2 (255 aa).

Residues 61–80 mediate DNA binding; that stretch reads HCDRNVSLGLDLKSLGKVLK.

Belongs to the PCNA family. Homotrimer. Interacts with the catalytic subunits of two DNA polymerase complexes: PolD1 in the delta complex and PolE1/DNApol-epsilon255 in the epsilon complex.

Its subcellular location is the nucleus. It is found in the chromosome. The protein resides in the cytoplasm. Functionally, likely to be an auxiliary protein of DNA polymerase delta complex and is probably involved in the control of DNA replication and repair by increasing the polymerase's processibility. May function independently of PCNA during DNA repair. The chain is Proliferating cell nuclear antigen 2 from Drosophila melanogaster (Fruit fly).